A 502-amino-acid polypeptide reads, in one-letter code: Glycerol kinase (502 aa).

ADP is bound at residue Thr-13. ATP is bound by residues Thr-13, Thr-14, and Ser-15. Thr-13 contacts sn-glycerol 3-phosphate. Arg-17 is a binding site for ADP. 4 residues coordinate sn-glycerol 3-phosphate: Arg-83, Glu-84, Tyr-135, and Asp-245. Arg-83, Glu-84, Tyr-135, Asp-245, and Gln-246 together coordinate glycerol. ADP-binding residues include Thr-267 and Gly-310. The ATP site is built by Thr-267, Gly-310, Gln-314, and Gly-411. ADP-binding residues include Gly-411 and Asn-415.

Belongs to the FGGY kinase family. Homotetramer and homodimer (in equilibrium).

The enzyme catalyses glycerol + ATP = sn-glycerol 3-phosphate + ADP + H(+). It functions in the pathway polyol metabolism; glycerol degradation via glycerol kinase pathway; sn-glycerol 3-phosphate from glycerol: step 1/1. With respect to regulation, activated by phosphorylation and inhibited by fructose 1,6-bisphosphate (FBP). Its function is as follows. Key enzyme in the regulation of glycerol uptake and metabolism. Catalyzes the phosphorylation of glycerol to yield sn-glycerol 3-phosphate. The chain is Glycerol kinase from Lactobacillus delbrueckii subsp. bulgaricus (strain ATCC BAA-365 / Lb-18).